We begin with the raw amino-acid sequence, 557 residues long: Mercuric reductase (557 aa).

The 65-residue stretch at 1–65 (MILLSIEGMT…AIEALGYIAK (65 aa)) folds into the HMA domain. 2 residues coordinate a metal cation: C11 and C14. Residues A106 and A126 each coordinate FAD. Residues C133 and C138 are joined by a disulfide bond. Residues K142, A207, D399, and V407 each coordinate FAD. 2 residues coordinate Hg(2+): C554 and C555.

This sequence belongs to the class-I pyridine nucleotide-disulfide oxidoreductase family. As to quaternary structure, homodimer. FAD is required as a cofactor.

The catalysed reaction is Hg + NADP(+) + H(+) = Hg(2+) + NADPH. In terms of biological role, resistance to Hg(2+) in bacteria appears to be governed by a specialized system which includes mercuric reductase. MerA protein is responsible for volatilizing mercury as Hg(0). The protein is Mercuric reductase (merA) of Shewanella putrefaciens (Pseudomonas putrefaciens).